The chain runs to 316 residues: MLLCVSCLSVNGEMNPLGPTPSVHRSVSFWLLRLSVFLLLSLRDSKGKAIWTAHLNITFQVGNRIISELGESGVFGNHSPLERVSGAVVLPEGWNQNACSPLTNFSRPDQTDTWLALIERGGCTFTHKINLAAEKGANGVIIYNYPGTGNKVFPMSHQGTENIVAVMIGNLKGMELLHLIQQGVYVTIIIEVGRMHMPWLSHYVMSLFTFLAATVTYLFLYCAWRPRVSNSSTRRQRQLKADVKKAIGQLQLRVLQDGDKELDPNEDSCVVCFDMYKAQDVIRILTCKHFFHKTCIDPWLLAHRTCPMCKCDILKP.

A signal peptide spans 1–12 (MLLCVSCLSVNG). An N-linked (GlcNAc...) asparagine glycan is attached at N56. Residues 84–178 (VSGAVVLPEG…GNLKGMELLH (95 aa)) enclose the PA domain. 2 helical membrane-spanning segments follow: residues 173–193 (GMELLHLIQQGVYVTIIIEVG) and 204–224 (VMSLFTFLAATVTYLFLYCAW). The segment at 269-310 (CVVCFDMYKAQDVIRILTCKHFFHKTCIDPWLLAHRTCPMCK) adopts an RING-type; atypical zinc-finger fold.

The protein localises to the membrane. The polypeptide is RING finger protein 148 (Rnf148) (Mus musculus (Mouse)).